Consider the following 216-residue polypeptide: Ras-related protein RABE1a (216 aa).

GTP is bound at residue 22 to 29 (GDSGVGKS). Positions 44 to 52 (FITTIGIDF) match the Effector region motif. GTP contacts are provided by residues 70-74 (DTAGQ), 128-131 (NKAD), and 159-160 (SA). A disordered region spans residues 185 to 216 (DARAEPQTIKINQSDQGAGTSQATQKSACCGT). Residues 193–216 (IKINQSDQGAGTSQATQKSACCGT) show a composition bias toward polar residues. S-geranylgeranyl cysteine attachment occurs at residues C213 and C214.

It belongs to the small GTPase superfamily. Rab family. In terms of assembly, interacts with PI5K2.

The protein localises to the golgi apparatus membrane. It localises to the cell membrane. In terms of biological role, involved in membrane trafficking from the Golgi to the plasma membrane. This is Ras-related protein RABE1a (RABE1A) from Arabidopsis thaliana (Mouse-ear cress).